A 196-amino-acid polypeptide reads, in one-letter code: Probable malonic semialdehyde reductase RutE (196 aa).

It belongs to the nitroreductase family. HadB/RutE subfamily. Requires FMN as cofactor.

The enzyme catalyses 3-hydroxypropanoate + NADP(+) = 3-oxopropanoate + NADPH + H(+). In terms of biological role, may reduce toxic product malonic semialdehyde to 3-hydroxypropionic acid, which is excreted. The protein is Probable malonic semialdehyde reductase RutE of Escherichia coli O45:K1 (strain S88 / ExPEC).